A 62-amino-acid polypeptide reads, in one-letter code: Large ribosomal subunit protein bL28 (62 aa).

This sequence belongs to the bacterial ribosomal protein bL28 family.

This is Large ribosomal subunit protein bL28 from Staphylococcus haemolyticus (strain JCSC1435).